Consider the following 118-residue polypeptide: Holo-[acyl-carrier-protein] synthase (118 aa).

Mg(2+) is bound by residues aspartate 5 and glutamate 50.

Belongs to the P-Pant transferase superfamily. AcpS family. The cofactor is Mg(2+).

The protein resides in the cytoplasm. The enzyme catalyses apo-[ACP] + CoA = holo-[ACP] + adenosine 3',5'-bisphosphate + H(+). In terms of biological role, transfers the 4'-phosphopantetheine moiety from coenzyme A to a Ser of acyl-carrier-protein. The chain is Holo-[acyl-carrier-protein] synthase from Aliarcobacter butzleri (strain RM4018) (Arcobacter butzleri).